The following is a 558-amino-acid chain: MEESAPFSIVSTVKALSGALRGDAGHEADISREREKLWFKESSAKNLRNRDFLAPNTVLTTLYAGGEVPSDILSAVHTLRGSGVLPIGATEVTTEGLRVCVDRCAAFRGVLCGIMPYLKPAAQRQGCVLINCPALHTKQSVPSPDTLALGQLRTILIADHLGAQLRRQGYTVSFCPALPQESDIVNFLKTLGIDWPTVPVSWTNEDREEKMKKALENSAYRDRETEKGKRRSRGEEIEGEKRGLKEDVRINLKQVVQDENLNGYDPSLGTCTVQREALCHLAQLDSATADFPASTTTALHVTSCQDEFRQQQTAMLWRAAGATALQRLVICGPVKTPGVQMNAAQYFQLRKAQMKEASEMKYGDQVEGQTWDDIIRVMTSATVRFELLSTVHTSPVTLDVQRDSGVSTKGPRGGVFVMYNCARLHTLFSSYEKGVEQGLYPEIPGGTELDFSALKEEGEWLLLFNYLIPFSEILDQSAQTLEHEGGGARVQLRTEQVCRFLVSLSKDFSSYYNRVHVLGEPLPHLFNQMFCRLLLLRALRELYHSALDSLNLPPIPQL.

Residues 213–240 are disordered; it reads KALENSAYRDRETEKGKRRSRGEEIEGE.

The polypeptide is DALR anticodon-binding domain-containing protein 3 (dalrd3) (Danio rerio (Zebrafish)).